The following is a 137-amino-acid chain: Large ribosomal subunit protein uL16 (137 aa).

The protein belongs to the universal ribosomal protein uL16 family. Part of the 50S ribosomal subunit.

In terms of biological role, binds 23S rRNA and is also seen to make contacts with the A and possibly P site tRNAs. This Mesorhizobium japonicum (strain LMG 29417 / CECT 9101 / MAFF 303099) (Mesorhizobium loti (strain MAFF 303099)) protein is Large ribosomal subunit protein uL16.